Consider the following 170-residue polypeptide: Acireductone dioxygenase (170 aa).

Fe(2+) is bound by residues His99, His101, Glu105, and His144. Positions 99, 101, 105, and 144 each coordinate Ni(2+).

Belongs to the acireductone dioxygenase (ARD) family. Monomer. It depends on Fe(2+) as a cofactor. Ni(2+) is required as a cofactor.

The catalysed reaction is 1,2-dihydroxy-5-(methylsulfanyl)pent-1-en-3-one + O2 = 3-(methylsulfanyl)propanoate + CO + formate + 2 H(+). It catalyses the reaction 1,2-dihydroxy-5-(methylsulfanyl)pent-1-en-3-one + O2 = 4-methylsulfanyl-2-oxobutanoate + formate + 2 H(+). Its pathway is amino-acid biosynthesis; L-methionine biosynthesis via salvage pathway; L-methionine from S-methyl-5-thio-alpha-D-ribose 1-phosphate: step 5/6. In terms of biological role, catalyzes 2 different reactions between oxygen and the acireductone 1,2-dihydroxy-3-keto-5-methylthiopentene (DHK-MTPene) depending upon the metal bound in the active site. Fe-containing acireductone dioxygenase (Fe-ARD) produces formate and 2-keto-4-methylthiobutyrate (KMTB), the alpha-ketoacid precursor of methionine in the methionine recycle pathway. Ni-containing acireductone dioxygenase (Ni-ARD) produces methylthiopropionate, carbon monoxide and formate, and does not lie on the methionine recycle pathway. The sequence is that of Acireductone dioxygenase from Bacillus cereus (strain ZK / E33L).